The chain runs to 259 residues: Ribosomal RNA small subunit methyltransferase J (259 aa).

Residues 101 to 102 (RD), 117 to 118 (ER), 153 to 154 (SS), and aspartate 176 contribute to the S-adenosyl-L-methionine site.

The protein belongs to the methyltransferase superfamily. RsmJ family.

Its subcellular location is the cytoplasm. The catalysed reaction is guanosine(1516) in 16S rRNA + S-adenosyl-L-methionine = N(2)-methylguanosine(1516) in 16S rRNA + S-adenosyl-L-homocysteine + H(+). In terms of biological role, specifically methylates the guanosine in position 1516 of 16S rRNA. The chain is Ribosomal RNA small subunit methyltransferase J from Aliivibrio fischeri (strain MJ11) (Vibrio fischeri).